Here is a 268-residue protein sequence, read N- to C-terminus: GTP cyclohydrolase FolE2 (268 aa).

It belongs to the GTP cyclohydrolase IV family.

It catalyses the reaction GTP + H2O = 7,8-dihydroneopterin 3'-triphosphate + formate + H(+). It participates in cofactor biosynthesis; 7,8-dihydroneopterin triphosphate biosynthesis; 7,8-dihydroneopterin triphosphate from GTP: step 1/1. Functionally, converts GTP to 7,8-dihydroneopterin triphosphate. This chain is GTP cyclohydrolase FolE2, found in Paraburkholderia xenovorans (strain LB400).